Here is a 226-residue protein sequence, read N- to C-terminus: MQLSIQPQSEAELLAKANWLAGFTLGELAQQLNTVVPPDLTRDKGWVGQIIERALGATAGSKPEQDFAHLGIELKTIPINNHGLPLETTFICLAPLIHNQGITWQTSHVKYKLQRVLWIPIQAERSIPIKDRYIGRAILWSPSYQQEQQLRNDWEELMEYIVLGRLDQINGHLGEVMQLRPKGRNRLSITQSIDQHGEQIQSLPLAFYLRKPFTAAILQNFLQQSD.

The protein belongs to the MutH family.

It is found in the cytoplasm. In terms of biological role, sequence-specific endonuclease that cleaves unmethylated GATC sequences. It is involved in DNA mismatch repair. The polypeptide is DNA mismatch repair protein MutH (Haemophilus ducreyi (strain 35000HP / ATCC 700724)).